Reading from the N-terminus, the 388-residue chain is Succinate--CoA ligase [ADP-forming] subunit beta (388 aa).

The 236-residue stretch at 9–244 (KSLFAEYGLP…PSQDDAREAH (236 aa)) folds into the ATP-grasp domain. ATP is bound by residues K46, 53 to 55 (GRG), E99, T102, and E107. N199 and D213 together coordinate Mg(2+). Substrate is bound by residues N264 and 321 to 323 (GIV).

It belongs to the succinate/malate CoA ligase beta subunit family. In terms of assembly, heterotetramer of two alpha and two beta subunits. Requires Mg(2+) as cofactor.

It carries out the reaction succinate + ATP + CoA = succinyl-CoA + ADP + phosphate. The catalysed reaction is GTP + succinate + CoA = succinyl-CoA + GDP + phosphate. Its pathway is carbohydrate metabolism; tricarboxylic acid cycle; succinate from succinyl-CoA (ligase route): step 1/1. Its function is as follows. Succinyl-CoA synthetase functions in the citric acid cycle (TCA), coupling the hydrolysis of succinyl-CoA to the synthesis of either ATP or GTP and thus represents the only step of substrate-level phosphorylation in the TCA. The beta subunit provides nucleotide specificity of the enzyme and binds the substrate succinate, while the binding sites for coenzyme A and phosphate are found in the alpha subunit. This chain is Succinate--CoA ligase [ADP-forming] subunit beta, found in Shewanella frigidimarina (strain NCIMB 400).